We begin with the raw amino-acid sequence, 49 residues long: Putative exported peptide YydF (49 aa).

Its function is as follows. Suggested to be the precursor for an exported, modified peptide that has antimicrobial and/or signaling properties. Synthesis requires YydG and YydH; the peptide is proposed to be exported by the YydIJ transporter. In the absence of the transporter, the modified peptide activates the LiaRS two-component regulatory system, possibly by eliciting cell envelope stress. This activation can occur in trans in cocultured cells lacking either the transporter or the whole operon. This is Putative exported peptide YydF (yydF) from Bacillus subtilis (strain 168).